Here is a 159-residue protein sequence, read N- to C-terminus: Eukaryotic translation initiation factor 5A-1 (159 aa).

Residues 1 to 12 (MSDEEHHFESKA) show a composition bias toward basic and acidic residues. The disordered stretch occupies residues 1-23 (MSDEEHHFESKADAGASKTYPQQ). The residue at position 52 (lysine 52) is a Hypusine.

Belongs to the eIF-5A family. In terms of processing, lys-52 undergoes hypusination, a unique post-translational modification that consists in the addition of a butylamino group from spermidine to lysine side chain, leading to the formation of the unusual amino acid hypusine. eIF-5As are the only known proteins to undergo this modification, which is essential for their function.

Translation factor that promotes translation elongation and termination, particularly upon ribosome stalling at specific amino acid sequence contexts. Binds between the exit (E) and peptidyl (P) site of the ribosome and promotes rescue of stalled ribosome: specifically required for efficient translation of polyproline-containing peptides as well as other motifs that stall the ribosome. Acts as a ribosome quality control (RQC) cofactor by joining the RQC complex to facilitate peptidyl transfer during CAT tailing step. The protein is Eukaryotic translation initiation factor 5A-1 (EIF-5A1) of Nicotiana plumbaginifolia (Leadwort-leaved tobacco).